A 930-amino-acid chain; its full sequence is SCY1-like protein 2 (930 aa).

Residues 32–327 (FDVGRHIASG…ADQMTKIPFF (296 aa)) enclose the Protein kinase domain. The stretch at 443-479 (DEIKNSVLPMVYRALEAPSIQIQELCLNIIPTFANLI) is one HEAT repeat. Residues Ser-658 and Ser-677 each carry the phosphoserine modification. A disordered region spans residues 658–706 (SGSESENREDGMQGKQKRGSLTLEEKQKLAKEQEQAQKLKSQQPLKPQV). Residues 680–694 (LEEKQKLAKEQEQAQ) show a composition bias toward basic and acidic residues. Over residues 695 to 705 (KLKSQQPLKPQ) the composition is skewed to low complexity. Thr-708 is modified (phosphothreonine). The segment at 895–930 (GMQGNPFFNPQNFAQPPPTTMTSSSSASNDLKDLFG) is disordered. Positions 897-922 (QGNPFFNPQNFAQPPPTTMTSSSSAS) are enriched in low complexity.

Belongs to the protein kinase superfamily. As to quaternary structure, interacts with clathrin and AP2B1; the interaction mediates the association with the AP-2 complex. Post-translationally, could autophosphorylate in presence of poly-L-lysine. In terms of tissue distribution, ubiquitously expressed.

It is found in the cytoplasmic vesicle. The protein resides in the clathrin-coated vesicle. The protein localises to the golgi apparatus. It localises to the trans-Golgi network membrane. Its subcellular location is the endosome membrane. In terms of biological role, component of the AP2-containing clathrin coat that may regulate clathrin-dependent trafficking at plasma membrane, TGN and endosomal system. A possible serine/threonine-protein kinase toward the beta2-subunit of the plasma membrane adapter complex AP2 and other proteins in presence of poly-L-lysine has not been confirmed. By regulating the expression of excitatory receptors at synapses, plays an essential role in neuronal function and signaling and in brain development. This chain is SCY1-like protein 2, found in Mus musculus (Mouse).